Here is a 637-residue protein sequence, read N- to C-terminus: Chaperone protein HtpG (637 aa).

An a; substrate-binding region spans residues 1–345; it reads MSQQETHGFQ…SNDLPLNVSR (345 aa). The segment at 346 to 562 is b; sequence EILQDNHITK…EGEMSTQMIK (217 aa). Positions 563-637 are c; that stretch reads LMQAAGQPVP…MNQMLLANLK (75 aa).

It belongs to the heat shock protein 90 family. In terms of assembly, homodimer.

It is found in the cytoplasm. Functionally, molecular chaperone. Has ATPase activity. In Shewanella oneidensis (strain ATCC 700550 / JCM 31522 / CIP 106686 / LMG 19005 / NCIMB 14063 / MR-1), this protein is Chaperone protein HtpG.